Consider the following 166-residue polypeptide: Endoribonuclease YbeY (166 aa).

Residues His132, His136, and His142 each contribute to the Zn(2+) site.

The protein belongs to the endoribonuclease YbeY family. It depends on Zn(2+) as a cofactor.

It is found in the cytoplasm. Its function is as follows. Single strand-specific metallo-endoribonuclease involved in late-stage 70S ribosome quality control and in maturation of the 3' terminus of the 16S rRNA. This chain is Endoribonuclease YbeY, found in Clostridium botulinum (strain 657 / Type Ba4).